Consider the following 216-residue polypeptide: NADH-quinone oxidoreductase subunit C (216 aa).

Belongs to the complex I 30 kDa subunit family. As to quaternary structure, NDH-1 is composed of 14 different subunits. Subunits NuoB, C, D, E, F, and G constitute the peripheral sector of the complex.

The protein localises to the cell inner membrane. The enzyme catalyses a quinone + NADH + 5 H(+)(in) = a quinol + NAD(+) + 4 H(+)(out). NDH-1 shuttles electrons from NADH, via FMN and iron-sulfur (Fe-S) centers, to quinones in the respiratory chain. The immediate electron acceptor for the enzyme in this species is believed to be ubiquinone. Couples the redox reaction to proton translocation (for every two electrons transferred, four hydrogen ions are translocated across the cytoplasmic membrane), and thus conserves the redox energy in a proton gradient. This Francisella tularensis subsp. tularensis (strain FSC 198) protein is NADH-quinone oxidoreductase subunit C.